A 515-amino-acid chain; its full sequence is Anterior pharynx in excess protein 1 (515 aa).

The first 26 residues, M1–E26, serve as a signal peptide directing secretion. At L27–L392 the chain is on the extracellular side. N123 is a glycosylation site (N-linked (GlcNAc...) asparagine). The 43-residue stretch at N130–C172 folds into the DSL domain. Intrachain disulfides connect C132–C141, C145–C155, C163–C172, C177–C187, C181–C193, C195–C204, C213–C218, C228–C237, C244–C256, C250–C268, C270–C279, C288–C300, C294–C310, and C312–C321. EGF-like domains are found at residues S173–E205, R203–D238, D240–K280, and S284–E322. N-linked (GlcNAc...) asparagine glycosylation is present at N200. Residues N325–C349 form the EGF-like 5; incomplete domain. Residues I393–F413 form a helical membrane-spanning segment. Topologically, residues F414–V515 are cytoplasmic. Disordered stretches follow at residues S427–G452 and R466–Y494. Residues G431 to G452 are compositionally biased toward low complexity.

It localises to the cell membrane. It is found in the nucleus. The protein localises to the cytoplasm. Probable ligand for lin-12/Notch and glp-1/Notch receptors and involved in the mediation of Notch signaling. Involved in the lin-12/Notch pathway signaling of cell fate in vulval precursor cells (VPCs), acting redundantly with dsl-1 and lag-2. Contributes to the establishment of the dorsal-ventral axis in early embryos. Involved in the specification of the blastomere cell ABp fate, probably acting as a signal from the P2 blastomere to the glp-1/Notch receptor on ABp and ABa. Probably acts as a signal, from the secondary vulval epithelial cells and the vulval muscle type 1 (vm1) cells, to activate the lin-12/Notch pathway in type 2 vulval muscle (vm2) cells, contributing to formation of the postsynaptic muscle plasma membrane extensions, known as muscle arms. Required for oocyte growth control, acting redundantly with lag-2, perhaps signaling via the glp-1/Notch pathway. Plays a somatic role in ovulation during adulthood, perhaps via lin-12/Notch signaling. Involved in establishing left-right asymmetry during intestinal organogenesis. The sequence is that of Anterior pharynx in excess protein 1 (apx-1) from Caenorhabditis elegans.